The chain runs to 87 residues: Small ribosomal subunit protein bS20 (87 aa).

Positions 1-11 are enriched in basic residues; it reads MAHHKSAIKRI. The segment at 1–26 is disordered; the sequence is MAHHKSAIKRIKQNEKRNARNRHQKS.

Belongs to the bacterial ribosomal protein bS20 family.

Binds directly to 16S ribosomal RNA. This is Small ribosomal subunit protein bS20 from Trichlorobacter lovleyi (strain ATCC BAA-1151 / DSM 17278 / SZ) (Geobacter lovleyi).